We begin with the raw amino-acid sequence, 438 residues long: Fumarate hydratase class II (438 aa).

Substrate contacts are provided by residues 76–78, 101–104, 111–113, and Thr-159; these read SGT, HPND, and SSN. His-160 acts as the Proton donor/acceptor in catalysis. Ser-291 is an active-site residue. Substrate is bound by residues Ser-292 and 297 to 299; that span reads KTN.

The protein belongs to the class-II fumarase/aspartase family. Fumarase subfamily. As to quaternary structure, homotetramer.

Its subcellular location is the cytoplasm. The enzyme catalyses (S)-malate = fumarate + H2O. It functions in the pathway carbohydrate metabolism; tricarboxylic acid cycle; (S)-malate from fumarate: step 1/1. Its function is as follows. Involved in the TCA cycle. Catalyzes the stereospecific interconversion of fumarate to L-malate. In Saccharolobus solfataricus (strain ATCC 35092 / DSM 1617 / JCM 11322 / P2) (Sulfolobus solfataricus), this protein is Fumarate hydratase class II.